We begin with the raw amino-acid sequence, 266 residues long: Ankyrin repeat domain-containing protein 45 (266 aa).

Composition is skewed to acidic residues over residues 1–11 (MESEGPPESES) and 18–32 (QEEENEEEEAQEPEE). Residues 1–43 (MESEGPPESESSEFFSQQEEENEEEEAQEPEETGPKNPLLQPA) form a disordered region. ANK repeat units lie at residues 76–105 (VGRNLLYAACMAGQSDVIRALAKYGVNLNE) and 109–138 (RGYTLLHCAAAWGRLETLKALVELDVDIEA).

It is found in the cytoplasm. The protein localises to the midbody. The protein resides in the midbody ring. Its subcellular location is the cleavage furrow. Its function is as follows. May play a role during cell division. This chain is Ankyrin repeat domain-containing protein 45, found in Homo sapiens (Human).